The sequence spans 307 residues: Elongation factor Ts (307 aa).

Residues 80–83 form an involved in Mg(2+) ion dislocation from EF-Tu region; the sequence is TDFV.

The protein belongs to the EF-Ts family.

The protein resides in the cytoplasm. Its function is as follows. Associates with the EF-Tu.GDP complex and induces the exchange of GDP to GTP. It remains bound to the aminoacyl-tRNA.EF-Tu.GTP complex up to the GTP hydrolysis stage on the ribosome. This is Elongation factor Ts from Albidiferax ferrireducens (strain ATCC BAA-621 / DSM 15236 / T118) (Rhodoferax ferrireducens).